We begin with the raw amino-acid sequence, 208 residues long: Ribosomal RNA large subunit methyltransferase E (208 aa).

The S-adenosyl-L-methionine site is built by G62, W64, D82, D98, and D123. The Proton acceptor role is filled by K163.

Belongs to the class I-like SAM-binding methyltransferase superfamily. RNA methyltransferase RlmE family.

The protein localises to the cytoplasm. The catalysed reaction is uridine(2552) in 23S rRNA + S-adenosyl-L-methionine = 2'-O-methyluridine(2552) in 23S rRNA + S-adenosyl-L-homocysteine + H(+). In terms of biological role, specifically methylates the uridine in position 2552 of 23S rRNA at the 2'-O position of the ribose in the fully assembled 50S ribosomal subunit. The polypeptide is Ribosomal RNA large subunit methyltransferase E (Edwardsiella ictaluri (strain 93-146)).